The sequence spans 753 residues: ATPase family gene 2 protein homolog B (753 aa).

N-acetylmethionine is present on M1. Residues 1 to 189 form a required for interaction with AFG2A and CINP region; the sequence is MAPDSDPFPE…PRTRVSLGGE (189 aa). Residues 171–203 form a disordered region; the sequence is SPDPAGLVTPRTRVSLGGEPPSEAQPQPEVPLG. ATP contacts are provided by residues 241-248 and 505-512; these read GPPGVGKT and GPPGCAKT.

Belongs to the AAA ATPase family. AFG2 subfamily. As to quaternary structure, part of the 55LCC heterohexameric ATPase complex composed at least of AIRIM, AFG2A, AFG2B and CINP. Associates with pre-60S ribosomal particles. In terms of tissue distribution, expressed in both neurons and glia during embryonic and adult stages of brain development.

Its subcellular location is the cytoplasm. The protein localises to the cytoskeleton. It is found in the spindle. The protein resides in the nucleus. It carries out the reaction ATP + H2O = ADP + phosphate + H(+). Its activity is regulated as follows. In the context of 55LCC heterohexameric ATPase complex, the ATPase activity is stimulated by DNA binding and inhibited in presence of RNA. Its function is as follows. ATP-dependent chaperone part of the 55LCC heterohexameric ATPase complex which is chromatin-associated and promotes replisome proteostasis to maintain replication fork progression and genome stability. Required for replication fork progression, sister chromatid cohesion, and chromosome stability. The ATPase activity is specifically enhanced by replication fork DNA and is coupled to cysteine protease-dependent cleavage of replisome substrates in response to replication fork damage. Uses ATPase activity to process replisome substrates in S-phase, facilitating their proteolytic turnover from chromatin to ensure DNA replication and mitotic fidelity. Plays an essential role in the cytoplasmic maturation steps of pre-60S ribosomal particles by promoting the release of shuttling protein RSL24D1/RLP24 from the pre-ribosomal particles. This Homo sapiens (Human) protein is ATPase family gene 2 protein homolog B.